Reading from the N-terminus, the 118-residue chain is Large ribosomal subunit protein uL18 (118 aa).

Belongs to the universal ribosomal protein uL18 family. As to quaternary structure, part of the 50S ribosomal subunit; part of the 5S rRNA/L5/L18/L25 subcomplex. Contacts the 5S and 23S rRNAs.

In terms of biological role, this is one of the proteins that bind and probably mediate the attachment of the 5S RNA into the large ribosomal subunit, where it forms part of the central protuberance. The sequence is that of Large ribosomal subunit protein uL18 from Rickettsia prowazekii (strain Madrid E).